Here is a 335-residue protein sequence, read N- to C-terminus: Phosphoserine phosphatase RsbU (335 aa).

The PPM-type phosphatase domain maps to 123-333 (DIGAISVPAK…DDFTLIVLRR (211 aa)).

The catalysed reaction is O-phospho-L-serine + H2O = L-serine + phosphate. It catalyses the reaction O-phospho-D-serine + H2O = D-serine + phosphate. Its activity is regulated as follows. Stimulated by a long-lived interaction with RsbT. Its function is as follows. Positive regulator of sigma-B activity. Dephosphorylates RsbV in response to environmental stress conveyed from the RsbXST module. The polypeptide is Phosphoserine phosphatase RsbU (rsbU) (Bacillus subtilis (strain 168)).